A 328-amino-acid chain; its full sequence is tRNA uridine(34) hydroxylase (328 aa).

A Rhodanese domain is found at 130-224 (LDKDTVVLDT…YGKDPEVQGE (95 aa)). Residue cysteine 184 is the Cysteine persulfide intermediate of the active site.

This sequence belongs to the TrhO family.

The catalysed reaction is uridine(34) in tRNA + AH2 + O2 = 5-hydroxyuridine(34) in tRNA + A + H2O. Catalyzes oxygen-dependent 5-hydroxyuridine (ho5U) modification at position 34 in tRNAs. The protein is tRNA uridine(34) hydroxylase of Streptococcus pneumoniae (strain Taiwan19F-14).